Consider the following 165-residue polypeptide: Putative L,D-transpeptidase YkuD (165 aa).

Residues 2-46 (LMYQVKPGETLESIAADFRTTRQALLQANPGLNGGQVSAGQSIII) form the LysM domain. The L,D-TPase catalytic domain occupies 57 to 164 (YRIAVSLNGR…VPNGTRVSIT (108 aa)). The Proton donor/acceptor role is filled by H124. Residue C140 is the Nucleophile of the active site.

This sequence belongs to the YkuD family. As to quaternary structure, monomer.

The protein localises to the spore wall. The protein operates within cell wall biogenesis; peptidoglycan biosynthesis. Functionally, probable enzyme that may play an important role in cell wall biology. This chain is Putative L,D-transpeptidase YkuD, found in Bacillus licheniformis (strain ATCC 14580 / DSM 13 / JCM 2505 / CCUG 7422 / NBRC 12200 / NCIMB 9375 / NCTC 10341 / NRRL NRS-1264 / Gibson 46).